Here is a 404-residue protein sequence, read N- to C-terminus: Probable oxalate decarboxylase ARB_04859 (404 aa).

An N-terminal signal peptide occupies residues 1 to 17 (MKYSAVLVAALAAIADA). A Cupin type-1 1 domain is found at 74 to 215 (FSLSKTRMLY…NFGVPPSTFD (142 aa)). 4 residues coordinate Mn(2+): H117, H119, E123, and H162. N-linked (GlcNAc...) asparagine glycosylation is found at N226 and N244. The Cupin type-1 2 domain maps to 249–393 (FHISNAPEIQ…AINVPIEVIE (145 aa)). Mn(2+)-binding residues include H296, H298, E303, and H342. An N-linked (GlcNAc...) asparagine glycan is attached at N346. Catalysis depends on E357, which acts as the Proton donor.

It depends on Mn(2+) as a cofactor.

It localises to the secreted. It catalyses the reaction oxalate + H(+) = formate + CO2. In terms of biological role, converts oxalate to formate and CO(2) in an O(2)-dependent reaction. Can also catalyze minor side reactions: oxalate oxidation to produce H(2)O(2), and oxalate-dependent, H(2)O(2)-independent dye oxidations. This chain is Probable oxalate decarboxylase ARB_04859, found in Arthroderma benhamiae (strain ATCC MYA-4681 / CBS 112371) (Trichophyton mentagrophytes).